The sequence spans 503 residues: Interferon regulatory factor 7 (503 aa).

Positions R11 to R126 form a DNA-binding region, IRF tryptophan pentad repeat. Residues R69–R88 are disordered. K92 is subject to N6-acetyllysine; by KAT2A and KAT2B. Disordered regions lie at residues G133–G156 and T242–A277. Residues A146–G156 are compositionally biased toward pro residues. Residues P284 to W456 are necessary for the interaction with NMI. Residue K375 forms a Glycyl lysine isopeptide (Lys-Gly) (interchain with G-Cter in ubiquitin) linkage. Residues K444 and K446 each participate in a glycyl lysine isopeptide (Lys-Gly) (interchain with G-Cter in SUMO) cross-link. S471, S472, and S475 each carry phosphoserine. Phosphoserine; by TBK1 and IKKE is present on residues S477 and S479. Phosphoserine is present on residues S483, S484, and S487.

It belongs to the IRF family. In terms of assembly, monomer. Homodimer; phosphorylation-induced. Heterodimer with IRF3. Interacts with TICAM1 and TICAM2. Interacts with MYD88 and TRAF6. Interacts with TRIM35. Interacts with NMI; the interaction is direct and leads to the inhibition of IRF7-mediated type I IFN production. Interacts with GBP4; preventing interaction between TRAF6 and IRF7, resulting in impaired TRAF6-mediated IRF7 ubiquitination. (Microbial infection) Interacts with Epstein-Barr virus LF2 and LMP1. As to quaternary structure, (Microbial infection) Interacts with rotavirus A NSP1; this interaction leads to the proteasome-dependent degradation of IRF7. In terms of assembly, (Microbial infection) Interacts with human herpes virus 8/HHV-8 proteins ORF45 and vIRF-1. (Microbial infection) Interacts with human T-cell leukemia virus 1/HTLV-1 protein HBZ. As to quaternary structure, (Microbial infection) Interacts with Seneca Valley virus protease 3C; this interaction is involved in the suppression of IRF7 expression and phosphorylation by the virus. In terms of assembly, (Microbial infection) Interacts with ebolavirus VP35; this interaction mediates the sumoylation of IRF7 and contributes to the viral inhibition of IFN-type I production. (Microbial infection) Interacts with severe fever with thrombocytopenia syndrome virus (SFTSV) NSs; this interaction sequesters IRF7 in NSs-induced cytoplasmic inclusion bodies. As to quaternary structure, (Microbial infection) Interacts with herpes virus 8/HHV-8 protein vIRF-4; this interaction prevents IRF7 dimerization and subsequent activation. In terms of assembly, (Microbial infection) Interacts with human metapneumovirus protein M2-2; this interaction prevents IRF7 phosphorlyation and subsequent TLR7/9-dependent IFN-alpha induction. Acetylation inhibits its DNA-binding ability and activity. In terms of processing, in response to a viral infection, phosphorylated on Ser-477 and Ser-479 by TBK1 and IKBKE1. Phosphorylation, and subsequent activation is inhibited by vaccinia virus protein E3. In TLR7- and TLR9-mediated signaling pathway, phosphorylated by IRAK1. Post-translationally, TRAF6-mediated ubiquitination is required for IRF7 activation. TRIM35 mediates IRF7 'Lys-48'-linked polyubiquitination and subsequent proteasomal degradation. Ubiquitinated by UBE3C, leading to its degradation. Sumoylated by TRIM28, which inhibits its transactivation activity. In terms of processing, (Microbial infection) Cleaved and inactivated by the protease 3C of enterovirus 71 allowing the virus to disrupt the host type I interferon production. Post-translationally, (Microbial infection) Cleaved and inactivated by the protease 3C of human enterovirus 68D (EV68) allowing the virus to disrupt the host type I interferon production. 'Lys-48'-linked polyubiquitination and subsequent proteasomal degradation is NMI-dependent in response to Sendai virus infection. In terms of processing, 'Lys-63'-linked ubiquitination by NEURL3 promotes IRF7 activation. As to expression, expressed predominantly in spleen, thymus and peripheral blood leukocytes.

The protein resides in the nucleus. The protein localises to the cytoplasm. With respect to regulation, in the absence of viral infection, maintained as a monomer in an autoinhibited state and phosphorylation disrupts this autoinhibition leading to the liberation of the DNA-binding and dimerization activities and its nuclear localization where it can activate type I IFN and ISG genes. In terms of biological role, key transcriptional regulator of type I interferon (IFN)-dependent immune responses and plays a critical role in the innate immune response against DNA and RNA viruses. Regulates the transcription of type I IFN genes (IFN-alpha and IFN-beta) and IFN-stimulated genes (ISG) by binding to an interferon-stimulated response element (ISRE) in their promoters. Can efficiently activate both the IFN-beta (IFNB) and the IFN-alpha (IFNA) genes and mediate their induction via both the virus-activated, MyD88-independent pathway and the TLR-activated, MyD88-dependent pathway. Induces transcription of ubiquitin hydrolase USP25 mRNA in response to lipopolysaccharide (LPS) or viral infection in a type I IFN-dependent manner. Required during both the early and late phases of the IFN gene induction but is more critical for the late than for the early phase. Exists in an inactive form in the cytoplasm of uninfected cells and following viral infection, double-stranded RNA (dsRNA), or toll-like receptor (TLR) signaling, becomes phosphorylated by IKBKE and TBK1 kinases. This induces a conformational change, leading to its dimerization and nuclear localization where along with other coactivators it can activate transcription of the type I IFN and ISG genes. Can also play a role in regulating adaptive immune responses by inducing PSMB9/LMP2 expression, either directly or through induction of IRF1. Binds to the Q promoter (Qp) of EBV nuclear antigen 1 a (EBNA1) and may play a role in the regulation of EBV latency. Can activate distinct gene expression programs in macrophages and regulate the anti-tumor properties of primary macrophages. This is Interferon regulatory factor 7 (IRF7) from Homo sapiens (Human).